The chain runs to 67 residues: Small ribosomal subunit protein bS21 (67 aa).

The protein belongs to the bacterial ribosomal protein bS21 family.

The sequence is that of Small ribosomal subunit protein bS21 from Rhodospirillum centenum (strain ATCC 51521 / SW).